The following is a 263-amino-acid chain: Small ribosomal subunit protein uS3 (263 aa).

The 69-residue stretch at 39–107 (VREYLKKKLK…PVHVNIEEIR (69 aa)) folds into the KH type-2 domain. The disordered stretch occupies residues 211 to 263 (GELPPEAATPREEERRPRRAPRGDRPDGARTGRPGGRGRGPRKADAAPAPEGE). Basic and acidic residues predominate over residues 219-240 (TPREEERRPRRAPRGDRPDGAR).

Belongs to the universal ribosomal protein uS3 family. As to quaternary structure, part of the 30S ribosomal subunit. Forms a tight complex with proteins S10 and S14.

In terms of biological role, binds the lower part of the 30S subunit head. Binds mRNA in the 70S ribosome, positioning it for translation. The sequence is that of Small ribosomal subunit protein uS3 from Bordetella pertussis (strain Tohama I / ATCC BAA-589 / NCTC 13251).